The sequence spans 341 residues: L-threonine 3-dehydrogenase (341 aa).

Cysteine 38 is a Zn(2+) binding site. Catalysis depends on charge relay system residues threonine 40 and histidine 43. Residues histidine 63, glutamate 64, cysteine 93, cysteine 96, cysteine 99, and cysteine 107 each coordinate Zn(2+). NAD(+) is bound by residues isoleucine 175, aspartate 195, arginine 200, 262–264, and 286–287; these read LGI and IY.

Belongs to the zinc-containing alcohol dehydrogenase family. In terms of assembly, homotetramer. Requires Zn(2+) as cofactor.

Its subcellular location is the cytoplasm. The enzyme catalyses L-threonine + NAD(+) = (2S)-2-amino-3-oxobutanoate + NADH + H(+). It participates in amino-acid degradation; L-threonine degradation via oxydo-reductase pathway; glycine from L-threonine: step 1/2. Its function is as follows. Catalyzes the NAD(+)-dependent oxidation of L-threonine to 2-amino-3-ketobutyrate. This chain is L-threonine 3-dehydrogenase, found in Escherichia coli O127:H6 (strain E2348/69 / EPEC).